We begin with the raw amino-acid sequence, 619 residues long: ESX-2 secretion system protein EccA2 (619 aa).

373–380 (GPPGTGKT) contacts ATP.

It belongs to the CbxX/CfxQ family. As to quaternary structure, part of the ESX-2 / type VII secretion system (T7SS), which is composed of cytosolic and membrane components. Residues 522-619 interact with an artificial EsxB-EsxA heterodimer from the adjacent ESX-1 locus.

Its subcellular location is the cytoplasm. In terms of biological role, shows ATPase activity. Could provide energy for export of ESX-2 substrates. The polypeptide is ESX-2 secretion system protein EccA2 (eccA2) (Mycobacterium tuberculosis (strain ATCC 25618 / H37Rv)).